Consider the following 160-residue polypeptide: Keratin-associated protein 13-4 (160 aa).

4 tandem repeats follow at residues 41–50 (CQLGSSLYRD), 51–60 (CQKTCWEPAS), 61–70 (CQKSCYHPRT), and 77–86 (CQTTCSGSLG). The tract at residues 41–86 (CQLGSSLYRDCQKTCWEPASCQKSCYHPRTSMLCCPCQTTCSGSLG) is 4 X 10 AA approximate repeats.

It belongs to the PMG family. In terms of assembly, interacts with hair keratins.

Its function is as follows. In the hair cortex, hair keratin intermediate filaments are embedded in an interfilamentous matrix, consisting of hair keratin-associated proteins (KRTAP), which are essential for the formation of a rigid and resistant hair shaft through their extensive disulfide bond cross-linking with abundant cysteine residues of hair keratins. The matrix proteins include the high-sulfur and high-glycine-tyrosine keratins. This is Keratin-associated protein 13-4 (KRTAP13-4) from Hylobates agilis (Agile gibbon).